Reading from the N-terminus, the 61-residue chain is Metallothionein-I, hippocampal (61 aa).

Residue methionine 1 is modified to N-acetylmethionine. Residues 1 to 29 form a beta region; sequence MDPNCSCATGDSCACASTCKCKECKCTSC. Positions 5, 7, 13, 15, 19, 21, 24, 26, 29, 33, 34, 36, 37, 41, 44, 48, 50, and 57 each coordinate a divalent metal cation. The alpha stretch occupies residues 30–61; sequence KKSCCSCCPVGCAKCAQGCICKGASDKCSCCA. Serine 58 carries the phosphoserine modification. Positions 59 and 60 each coordinate a divalent metal cation.

The protein belongs to the metallothionein superfamily. Type 1 family.

Metallothioneins have a high content of cysteine residues that bind various heavy metals; these proteins are transcriptionally regulated by both heavy metals and glucocorticoids. This isoform may play a role in regulating the transport, accumulation, and compartmentation of zinc in the hippocampus. The protein is Metallothionein-I, hippocampal of Bos taurus (Bovine).